The following is a 204-amino-acid chain: Refilin-A (204 aa).

A disordered region spans residues 1-52 (MVGHLHLQAMGDTREQSRDGLLDSPDSGLPPSPSPSPPFYALSPGTLDTRTT). Residues 12 to 21 (DTREQSRDGL) show a composition bias toward basic and acidic residues. Positions 28–38 (GLPPSPSPSPP) are enriched in pro residues. An Asymmetric dimethylarginine modification is found at arginine 151.

It belongs to the Refilin family. As to quaternary structure, interacts with FLNA and FLNB. As to expression, detected in various tissues, with highest expression in lung, followed by spleen.

It is found in the cytoplasm. The protein localises to the cytoskeleton. In terms of biological role, involved in the regulation of the perinuclear actin network and nuclear shape through interaction with filamins. Plays an essential role in the formation of cartilaginous skeletal elements. This Mus musculus (Mouse) protein is Refilin-A (Rflna).